Consider the following 253-residue polypeptide: uncharacterized protein (253 aa).

S-adenosyl-L-methionine is bound by residues Gly-45, 66 to 67 (DA), 94 to 95 (AE), and Arg-110.

Belongs to the methyltransferase superfamily.

This is an uncharacterized protein from Bacillus subtilis (strain 168).